Reading from the N-terminus, the 244-residue chain is Probable 2-phosphosulfolactate phosphatase (244 aa).

It belongs to the ComB family. Mg(2+) is required as a cofactor.

It catalyses the reaction (2R)-O-phospho-3-sulfolactate + H2O = (2R)-3-sulfolactate + phosphate. The polypeptide is Probable 2-phosphosulfolactate phosphatase (Thermosynechococcus vestitus (strain NIES-2133 / IAM M-273 / BP-1)).